Consider the following 305-residue polypeptide: N-acetylglucosamine-1-phosphotransferase subunit gamma (305 aa).

A signal peptide spans 1 to 24 (MAAGLARLLLLLGLSAGGPAPAGA). The region spanning 69 to 171 (GKCFSLVEST…TFETPLVCHP (103 aa)) is the MRH domain. C71 and C84 are joined by a disulfide. N-linked (GlcNAc...) asparagine glycosylation is found at N88 and N115. Disulfide bonds link C129/C157 and C142/C169. Residues 176-279 (VYPTLPEALQ…YTRPTETSNL (104 aa)) form the DMAP1-binding domain. Residues 267-305 (GIPYTRPTETSNLEHLGHETPRAKSPEQLRGDPGLRGSL) form a disordered region. The segment covering 281 to 296 (HLGHETPRAKSPEQLR) has biased composition (basic and acidic residues).

In terms of assembly, homodimer; disulfide-linked. Hexamer of two alpha (GNPTAB), two beta (GNPTAB) and two gamma (GNPTG) subunits; disulfide-linked. The alpha and/or the beta subunits of the enzyme constitute the catalytic subunits. Cys-245 mediates the formation of the interchain disulfide bond for formation of the homodimer. Cys-142, Cys-157 and Cys-169 are involved in intramolecular disulfide bonds formation. In terms of tissue distribution, widely expressed.

The protein localises to the secreted. The protein resides in the golgi apparatus. Its function is as follows. Non-catalytic subunit of the N-acetylglucosamine-1-phosphotransferase complex, an enzyme that catalyzes the formation of mannose 6-phosphate (M6P) markers on high mannose type oligosaccharides in the Golgi apparatus. Binds and presents the high mannose glycans of the acceptor to the catalytic alpha and beta subunits (GNPTAB). Enhances the rate of N-acetylglucosamine-1-phosphate transfer to the oligosaccharides of acid hydrolase acceptors. This Homo sapiens (Human) protein is N-acetylglucosamine-1-phosphotransferase subunit gamma (GNPTG).